The following is a 727-amino-acid chain: NADH-ubiquinone oxidoreductase 75 kDa subunit, mitochondrial (727 aa).

The transit peptide at 1-23 (MLRIPVRKALVGLSKSPKGCVRT) directs the protein to the mitochondrion. The region spanning 30-108 (NLIEVFVDGQ…GWNILTNSEK (79 aa)) is the 2Fe-2S ferredoxin-type domain. Residues Cys64, Cys75, and Cys78 each coordinate [2Fe-2S] cluster. Lys84 carries the post-translational modification N6-acetyllysine. Cys92 provides a ligand contact to [2Fe-2S] cluster. The region spanning 108–147 (KSKKAREGVMEFLLANHPLDCPICDQGGECDLQDQSMMFG) is the 4Fe-4S His(Cys)3-ligated-type domain. [4Fe-4S] cluster-binding residues include His124, Cys128, Cys131, Cys137, Cys176, Cys179, Cys182, and Cys226. The 57-residue stretch at 245-301 (TRKTESIDVMDAVGSNIVVSTRTGEVMRILPRMHEDINEXWISDKTRFAYDGLKRQR) folds into the 4Fe-4S Mo/W bis-MGD-type domain. 3 positions are modified to N6-acetyllysine: Lys467, Lys499, and Lys709.

The protein belongs to the complex I 75 kDa subunit family. As to quaternary structure, core subunit of respiratory chain NADH dehydrogenase (Complex I) which is composed of 45 different subunits. This is the largest subunit of complex I and it is a component of the iron-sulfur (IP) fragment of the enzyme. Complex I associates with ubiquinol-cytochrome reductase complex (Complex III) to form supercomplexes. Interacts with MDM2 and AKAP1. [2Fe-2S] cluster serves as cofactor. It depends on [4Fe-4S] cluster as a cofactor.

The protein localises to the mitochondrion inner membrane. The enzyme catalyses a ubiquinone + NADH + 5 H(+)(in) = a ubiquinol + NAD(+) + 4 H(+)(out). In terms of biological role, core subunit of the mitochondrial membrane respiratory chain NADH dehydrogenase (Complex I) which catalyzes electron transfer from NADH through the respiratory chain, using ubiquinone as an electron acceptor. Essential for catalysing the entry and efficient transfer of electrons within complex I. Plays a key role in the assembly and stability of complex I and participates in the association of complex I with ubiquinol-cytochrome reductase complex (Complex III) to form supercomplexes. The chain is NADH-ubiquinone oxidoreductase 75 kDa subunit, mitochondrial (NDUFS1) from Gorilla gorilla gorilla (Western lowland gorilla).